Here is a 115-residue protein sequence, read N- to C-terminus: Divalent-cation tolerance protein CutA (115 aa).

Residues C19, H86, and H87 each contribute to the Cu cation site.

The protein belongs to the CutA family. As to quaternary structure, homotrimer. Requires Cu cation as cofactor.

Its subcellular location is the cytoplasm. Involved in resistance toward heavy metals. This is Divalent-cation tolerance protein CutA from Citrobacter koseri (strain ATCC BAA-895 / CDC 4225-83 / SGSC4696).